The sequence spans 432 residues: Adenylosuccinate synthetase (432 aa).

Residues 12-18 and 40-42 each bind GTP; these read GDEGKGK and GHT. Asp-13 functions as the Proton acceptor in the catalytic mechanism. The Mg(2+) site is built by Asp-13 and Gly-40. Residues 13–16, 38–41, Thr-129, Arg-143, Gln-224, Thr-239, and Arg-303 contribute to the IMP site; these read DEGK and NAGH. The active-site Proton donor is the His-41. Substrate is bound at residue 299–305; the sequence is VTTGRRR. Residues Arg-305, 331 to 333, and 413 to 415 each bind GTP; these read KLD and GVG.

It belongs to the adenylosuccinate synthetase family. Homodimer. The cofactor is Mg(2+).

It is found in the cytoplasm. The enzyme catalyses IMP + L-aspartate + GTP = N(6)-(1,2-dicarboxyethyl)-AMP + GDP + phosphate + 2 H(+). It functions in the pathway purine metabolism; AMP biosynthesis via de novo pathway; AMP from IMP: step 1/2. In terms of biological role, plays an important role in the de novo pathway of purine nucleotide biosynthesis. Catalyzes the first committed step in the biosynthesis of AMP from IMP. The polypeptide is Adenylosuccinate synthetase (Mycobacterium marinum (strain ATCC BAA-535 / M)).